The chain runs to 600 residues: Melanophilin (600 aa).

The RabBD domain maps to 4–124 (KLDLSKLTDE…IGSLEWYYEH (121 aa)). The FYVE-type zinc finger occupies 64 to 107 (CARCLQPYQLLVNSKRQCLECGLFTCKSCGRVHPEEQGWICDPC). Disordered regions lie at residues 146-277 (QGGA…AELC), 390-465 (EELT…LSEL), 499-541 (TVKP…AKAM), and 553-600 (NSLK…AHQS). Basic and acidic residues-rich tracts occupy residues 232–243 (CSEKAAPHKAEG) and 409–420 (KDEKAEPNRDKS). Positions 373-496 (GVRTEADVEE…ESRIAALRAA (124 aa)) form a coiled coil. Residues 558–569 (QGKDDDSFDRKS) are compositionally biased toward basic and acidic residues.

As to quaternary structure, binds RAB27A that has been activated by GTP-binding via its N-terminus. Binds MYO5A via its C-terminal coiled coil domain.

It is found in the cytoplasm. Its function is as follows. Rab effector protein involved in melanosome transport. Serves as link between melanosome-bound RAB27A and the motor protein MYO5A. The sequence is that of Melanophilin (MLPH) from Homo sapiens (Human).